A 233-amino-acid chain; its full sequence is uncharacterized protein (233 aa).

Residues His-64, His-66, Asp-68, His-69, His-143, Asp-162, and His-212 each contribute to the Zn(2+) site.

It belongs to the metallo-beta-lactamase superfamily. Glyoxalase II family. Zn(2+) serves as cofactor.

This is an uncharacterized protein from Bacillus subtilis (strain 168).